The chain runs to 611 residues: Leukotriene A-4 hydrolase (611 aa).

Lys-73 is subject to N6-acetyllysine. Residues Gln-135–Gln-137 and Ser-267–Glu-272 each bind a peptide. Position 296 (His-296) interacts with Zn(2+). Catalysis depends on Glu-297, which acts as the Proton acceptor. His-300 and Glu-319 together coordinate Zn(2+). N6-acetyllysine is present on Lys-337. Tyr-384 (proton donor) is an active-site residue. N6-acetyllysine is present on Lys-414. Position 416 is a phosphoserine (Ser-416). Arg-564–Lys-566 is a binding site for a peptide. Lys-573 is subject to N6-acetyllysine.

This sequence belongs to the peptidase M1 family. As to quaternary structure, monomer. Zn(2+) is required as a cofactor. Post-translationally, phosphorylation at Ser-416 inhibits leukotriene-A4 hydrolase activity. activity.

The protein resides in the cytoplasm. The catalysed reaction is leukotriene A4 + H2O = leukotriene B4. It catalyses the reaction (5S,6S)-epoxy-(18R)-hydroxy-(7E,9E,11Z,14Z,16E)-eicosapentaenoate + H2O = resolvin E1. It carries out the reaction (5S,6S)-epoxy-(18S)-hydroxy-(7E,9E,11Z,14Z,16E)-eicosapentaenoate + H2O = 18S-resolvin E1. The enzyme catalyses Release of the N-terminal residue from a tripeptide.. It functions in the pathway lipid metabolism; leukotriene B4 biosynthesis. With respect to regulation, inhibited by bestatin. The epoxide hydrolase activity is restrained by suicide inactivation that involves binding of LTA4 to Tyr-379. 4-(4-benzylphenyl)thiazol-2-amine (ARM1) selectively inhibits the epoxide hydrolase activity. Bifunctional zinc metalloenzyme that comprises both epoxide hydrolase (EH) and aminopeptidase activities. Acts as an epoxide hydrolase to catalyze the conversion of LTA4 to the pro-inflammatory mediator leukotriene B4 (LTB4). Also has aminopeptidase activity, with high affinity for N-terminal arginines of various synthetic tripeptides. In addition to its pro-inflammatory EH activity, may also counteract inflammation by its aminopeptidase activity, which inactivates by cleavage another neutrophil attractant, the tripeptide Pro-Gly-Pro (PGP), a bioactive fragment of collagen generated by the action of matrix metalloproteinase-9 (MMP9) and prolylendopeptidase (PREPL). Involved also in the biosynthesis of resolvin E1 and 18S-resolvin E1 from eicosapentaenoic acid, two lipid mediators that show potent anti-inflammatory and pro-resolving actions. This chain is Leukotriene A-4 hydrolase (LTA4H), found in Cavia porcellus (Guinea pig).